The following is a 387-amino-acid chain: Mannitol-1-phosphate 5-dehydrogenase (387 aa).

Residue 3–14 participates in NAD(+) binding; that stretch reads ALHFGAGNIGRG.

Belongs to the mannitol dehydrogenase family.

It carries out the reaction D-mannitol 1-phosphate + NAD(+) = beta-D-fructose 6-phosphate + NADH + H(+). In Yersinia pseudotuberculosis serotype O:1b (strain IP 31758), this protein is Mannitol-1-phosphate 5-dehydrogenase.